The following is a 551-amino-acid chain: Tetrachloroethene reductive dehalogenase (551 aa).

Residues 1-39 (MGEINRRNFLKVSILGAAAAAVASASAVKGMVSPLVADA) constitute a signal peptide (tat-type signal). One can recognise a 4Fe-4S ferredoxin-type 1 domain in the interval 411–440 (PRKFGVREFCRLCKKCADACPAQAISHEKD). Positions 420, 423, 426, 430, 467, 478, 481, and 485 each coordinate [4Fe-4S] cluster. Residues 478-496 (CSNCVAVCSWNKVETWNHD) form the 4Fe-4S ferredoxin-type 2 domain.

The protein belongs to the PceA family. Requires [4Fe-4S] cluster as cofactor. It depends on corrinoid as a cofactor. Predicted to be exported by the Tat system. The position of the signal peptide cleavage has not been experimentally proven.

Its subcellular location is the cell membrane. It catalyses the reaction trichloroethene + chloride + A + H(+) = tetrachloroethene + AH2. The catalysed reaction is trichloroethene + AH2 = (Z)-1,2-dichloroethene + chloride + A + H(+). Catalyzes the reductive dechlorination of tetrachloroethene (PCE) to trichloroethene (TCE) and of trichloroethene to cis-1,2-dichloroethene (DCE). This is Tetrachloroethene reductive dehalogenase from Desulfitobacterium hafniense (Desulfitobacterium frappieri).